The chain runs to 204 residues: N-(5'-phosphoribosyl)anthranilate isomerase (204 aa).

Belongs to the TrpF family.

It catalyses the reaction N-(5-phospho-beta-D-ribosyl)anthranilate = 1-(2-carboxyphenylamino)-1-deoxy-D-ribulose 5-phosphate. It functions in the pathway amino-acid biosynthesis; L-tryptophan biosynthesis; L-tryptophan from chorismate: step 3/5. This is N-(5'-phosphoribosyl)anthranilate isomerase from Bacillus cereus (strain B4264).